A 156-amino-acid chain; its full sequence is Hemerythrin-like protein (156 aa).

Fe cation contacts are provided by His-54, His-84, Glu-88, His-109, His-113, His-142, and Asp-147.

It belongs to the hemerythrin family.

Its function is as follows. Oxygen-binding protein. The oxygen-binding site contains two iron atoms. This chain is Hemerythrin-like protein, found in Nematostella vectensis (Starlet sea anemone).